We begin with the raw amino-acid sequence, 147 residues long: Epididymal secretory protein E3-beta (147 aa).

The signal sequence occupies residues 1-25; that stretch reads MASSLKIWGTLLALLCILCTLLVQS.

In terms of tissue distribution, epididymis.

It localises to the secreted. In terms of biological role, possible function in sperm maturation. The protein is Epididymal secretory protein E3-beta (EDDM3B) of Homo sapiens (Human).